A 160-amino-acid polypeptide reads, in one-letter code: Snaclec subunit A (160 aa).

Positions 1–23 (MGRFILVNLGLLVVAFSLRGSEA) are cleaved as a signal peptide. Intrachain disulfides connect Cys25-Cys36, Cys53-Cys150, and Cys125-Cys142. One can recognise a C-type lectin domain in the interval 32–151 (YDKYCYKVFD…CDFTLPFICK (120 aa)).

It belongs to the snaclec family. In terms of assembly, heterodimer of subunits A and B; disulfide-linked. In terms of tissue distribution, expressed by the venom gland.

Its subcellular location is the secreted. Interferes with one step of hemostasis (modulation of platelet aggregation, or coagulation cascade, for example). This is Snaclec subunit A from Philodryas olfersii (Green snake).